Consider the following 247-residue polypeptide: ATP synthase subunit a (247 aa).

6 helical membrane passes run 24–44 (IAFTNSSAYMLVAVVLTSLLM), 82–102 (FFPFVFTIFMLVTVSNLVGIV), 112–132 (IIVTAALAFLVFFTVLIYGFY), 141–161 (LFVPSGIPIVILPLVVAIEVI), 194–214 (MLGAMGIVGVFGAVLPLALVV), and 219–239 (LELLVAFLQAYVFTILTCIYI).

Belongs to the ATPase A chain family. As to quaternary structure, F-type ATPases have 2 components, CF(1) - the catalytic core - and CF(0) - the membrane proton channel. CF(1) has five subunits: alpha(3), beta(3), gamma(1), delta(1), epsilon(1). CF(0) has three main subunits: a(1), b(2) and c(9-12). The alpha and beta chains form an alternating ring which encloses part of the gamma chain. CF(1) is attached to CF(0) by a central stalk formed by the gamma and epsilon chains, while a peripheral stalk is formed by the delta and b chains.

The protein localises to the cell inner membrane. Its function is as follows. Key component of the proton channel; it plays a direct role in the translocation of protons across the membrane. The protein is ATP synthase subunit a of Nitrobacter hamburgensis (strain DSM 10229 / NCIMB 13809 / X14).